Consider the following 330-residue polypeptide: Phenylalanine--tRNA ligase alpha subunit (330 aa).

Residue Glu246 participates in Mg(2+) binding.

Belongs to the class-II aminoacyl-tRNA synthetase family. Phe-tRNA synthetase alpha subunit type 1 subfamily. Tetramer of two alpha and two beta subunits. Mg(2+) is required as a cofactor.

Its subcellular location is the cytoplasm. The enzyme catalyses tRNA(Phe) + L-phenylalanine + ATP = L-phenylalanyl-tRNA(Phe) + AMP + diphosphate + H(+). In Campylobacter jejuni subsp. doylei (strain ATCC BAA-1458 / RM4099 / 269.97), this protein is Phenylalanine--tRNA ligase alpha subunit.